A 916-amino-acid polypeptide reads, in one-letter code: Translation initiation factor IF-2 (916 aa).

The span at 151–191 (NLDEQQRLAESDRARDEAIQRKRDEEQAAKDRVEAERKAAE) shows a compositional bias: basic and acidic residues. Disordered regions lie at residues 151-262 (NLDE…SHVM) and 280-328 (HLSA…ERPT). Low complexity-rich tracts occupy residues 192–243 (EAAA…ATPA) and 293–305 (RGKP…SSSS). One can recognise a tr-type G domain in the interval 415 to 584 (SRPPVVTIMG…SLQAEVLELK (170 aa)). The G1 stretch occupies residues 424–431 (GHVDHGKT). Position 424 to 431 (424 to 431 (GHVDHGKT)) interacts with GTP. A G2 region spans residues 449 to 453 (GITQH). The interval 470–473 (DTPG) is G3. GTP is bound by residues 470-474 (DTPGH) and 524-527 (NKID). A G4 region spans residues 524–527 (NKID). The interval 560 to 562 (SAK) is G5.

The protein belongs to the TRAFAC class translation factor GTPase superfamily. Classic translation factor GTPase family. IF-2 subfamily.

It is found in the cytoplasm. Its function is as follows. One of the essential components for the initiation of protein synthesis. Protects formylmethionyl-tRNA from spontaneous hydrolysis and promotes its binding to the 30S ribosomal subunits. Also involved in the hydrolysis of GTP during the formation of the 70S ribosomal complex. The polypeptide is Translation initiation factor IF-2 (Xanthomonas campestris pv. campestris (strain ATCC 33913 / DSM 3586 / NCPPB 528 / LMG 568 / P 25)).